The sequence spans 547 residues: Chaperonin GroEL (547 aa).

ATP-binding positions include 30–33 (TLGP), Lys-51, 87–91 (DGTTT), Gly-415, and Asp-496. A disordered region spans residues 528–547 (DKSDMPAMPPGGMGGMGGMY). The segment covering 538-547 (GGMGGMGGMY) has biased composition (gly residues).

It belongs to the chaperonin (HSP60) family. As to quaternary structure, forms a cylinder of 14 subunits composed of two heptameric rings stacked back-to-back. Interacts with the co-chaperonin GroES.

The protein localises to the cytoplasm. The catalysed reaction is ATP + H2O + a folded polypeptide = ADP + phosphate + an unfolded polypeptide.. Together with its co-chaperonin GroES, plays an essential role in assisting protein folding. The GroEL-GroES system forms a nano-cage that allows encapsulation of the non-native substrate proteins and provides a physical environment optimized to promote and accelerate protein folding. The protein is Chaperonin GroEL of Chlorobium luteolum (strain DSM 273 / BCRC 81028 / 2530) (Pelodictyon luteolum).